The following is a 108-amino-acid chain: Tetrahydromethanopterin S-methyltransferase subunit B (108 aa).

A helical transmembrane segment spans residues 77–99; that stretch reads FQGMFFGFWVTMAVLVLVTILAV.

This sequence belongs to the MtrB family. The complex is composed of 8 subunits; MtrA, MtrB, MtrC, MtrD, MtrE, MtrF, MtrG and MtrH.

It localises to the cell membrane. It carries out the reaction 5-methyl-5,6,7,8-tetrahydromethanopterin + coenzyme M + 2 Na(+)(in) = 5,6,7,8-tetrahydromethanopterin + methyl-coenzyme M + 2 Na(+)(out). Its pathway is one-carbon metabolism; methanogenesis from CO(2); methyl-coenzyme M from 5,10-methylene-5,6,7,8-tetrahydromethanopterin: step 2/2. Functionally, part of a complex that catalyzes the formation of methyl-coenzyme M and tetrahydromethanopterin from coenzyme M and methyl-tetrahydromethanopterin. This is an energy-conserving, sodium-ion translocating step. The protein is Tetrahydromethanopterin S-methyltransferase subunit B of Methanococcus maripaludis (strain DSM 14266 / JCM 13030 / NBRC 101832 / S2 / LL).